The primary structure comprises 661 residues: Solute carrier organic anion transporter family member 1A4 (661 aa).

Residues 1–20 are Cytoplasmic-facing; that stretch reads MGKSEKRVATHGVRCFAKIK. The chain crosses the membrane as a helical span at residues 21–40; sequence MFLLALTCAYVSKSLSGTYM. The Extracellular portion of the chain corresponds to 41-59; that stretch reads NSMLTQIERQFGIPTSIVG. The helical transmembrane segment at 60–80 threads the bilayer; it reads LINGSFEIGNLLLIIFVSYFG. Over 81 to 86 the chain is Cytoplasmic; that stretch reads TKLHRP. A helical transmembrane segment spans residues 87–111; sequence IMIGVGCAVMGLGCFLISLPHFLMG. Residues 112-154 lie on the Extracellular side of the membrane; it reads QYEYETILPTSNVSSNSFFCVENRSQTLNPTQDPSECVKEMKS. Residues Asn-123 and Asn-134 are each glycosylated (N-linked (GlcNAc...) asparagine). A helical membrane pass occupies residues 155–183; the sequence is LMWIYVLVGNIIRGIGETPIMPLGISYIE. At 184 to 202 the chain is on the cytoplasmic side; that stretch reads DFAKSENSPLYIGILETGM. A helical membrane pass occupies residues 203–223; that stretch reads TIGPLIGLLLASSCANIYVDI. Residues 224–241 are Extracellular-facing; that stretch reads ESVNTDDLTITPTDTRWV. Residues 242–266 traverse the membrane as a helical segment; that stretch reads GAWWIGFLVCAGVNILTSFPFFFFP. Over 267–310 the chain is Cytoplasmic; it reads KTLPKEGLQENVDGTENAKEKKHRKKAKEEKRGITKDFFVFMKS. Residues 311–332 traverse the membrane as a helical segment; that stretch reads LSCNPIYMLFILISVLQFNAFI. The Extracellular segment spans residues 333–352; it reads NSFTFMPKYLEQQYGKSTAE. The helical transmembrane segment at 353–376 threads the bilayer; the sequence is VVFLMGLYMLPPICLGYLIGGLIM. The Cytoplasmic segment spans residues 377–380; it reads KKFK. Residues 381 to 404 form a helical membrane-spanning segment; it reads VTVKKAAHLAFWLCLSEYLLSFLS. The Extracellular portion of the chain corresponds to 405–512; it reads YVMTCDNFPV…PDCANKLQYF (108 aa). Positions 432–487 constitute a Kazal-like domain; the sequence is NKVLADCNTRCNCSTNTWDPVCGDNGLAYMSACLAGCEKSVGTGTNMVFQNCSCIQ. 3 cysteine pairs are disulfide-bonded: Cys-438–Cys-468, Cys-444–Cys-464, and Cys-453–Cys-485. An N-linked (GlcNAc...) asparagine glycan is attached at Asn-443. N-linked (GlcNAc...) asparagine glycans are attached at residues Asn-482 and Asn-491. A helical membrane pass occupies residues 513–535; the sequence is LIIAIFGCFIYSLAGIPGYMVLL. Over 536 to 544 the chain is Cytoplasmic; that stretch reads RCIKSEEKS. Residues 545–570 traverse the membrane as a helical segment; sequence LGVGLHAFCIRILAGIPAPIYFGALI. The Extracellular portion of the chain corresponds to 571–604; that stretch reads DRTCLHWGTLKCGEPGACRMYDINSFRRLYLGLP. Residues 605-622 traverse the membrane as a helical segment; it reads AALRGASFVPAFFILRLT. Residues 623-661 are Cytoplasmic-facing; sequence RTFQFPGDIESSKTDHAEMKLTLKESECTEVLRSKVTED. Ser-633 and Ser-634 each carry phosphoserine.

Belongs to the organo anion transporter (TC 2.A.60) family. As to expression, highly expressed in brain, liver, and kidney but not expressed in heart, spleen, lung, skeletal muscle, and testis.

The protein localises to the cell membrane. It catalyses the reaction estrone 3-sulfate(out) = estrone 3-sulfate(in). The catalysed reaction is taurocholate(out) = taurocholate(in). It carries out the reaction prostaglandin E2(out) = prostaglandin E2(in). The enzyme catalyses L-thyroxine(out) = L-thyroxine(in). In terms of biological role, mediates the Na(+)-independent transport of organic anions such as taurocholate, cholate, 17-beta-glucuronosyl estradiol, prostaglandin E2, estrone 3-sulfate, L-thyroxine (T4), the cardiac glycosides ouabain and digoxin and thyroid hormones. May play an especially important role in the brain accumulation and toxicity of digoxin and in the hepatobiliary and renal excretion of cardiac glycosides. Shows a pH-sensitive substrate specificity which may be ascribed to the protonation state of the binding site and leads to a stimulation of substrate transport in an acidic microenvironment. Hydrogencarbonate/HCO3(-) acts as the probable counteranion that exchanges for organic anions. The chain is Solute carrier organic anion transporter family member 1A4 (Slco1a4) from Rattus norvegicus (Rat).